The sequence spans 222 residues: Ribosome maturation factor RimM (222 aa).

The segment at 1–22 (MTERKQGAARPLNRPLVQPQGE) is disordered. The PRC barrel domain occupies 145–222 (EDEFYWVDLI…RIVVDWGLDY (78 aa)).

The protein belongs to the RimM family. Binds ribosomal protein uS19.

It is found in the cytoplasm. An accessory protein needed during the final step in the assembly of 30S ribosomal subunit, possibly for assembly of the head region. Essential for efficient processing of 16S rRNA. May be needed both before and after RbfA during the maturation of 16S rRNA. It has affinity for free ribosomal 30S subunits but not for 70S ribosomes. The chain is Ribosome maturation factor RimM from Cupriavidus necator (strain ATCC 17699 / DSM 428 / KCTC 22496 / NCIMB 10442 / H16 / Stanier 337) (Ralstonia eutropha).